A 405-amino-acid chain; its full sequence is Macrolide efflux protein A (405 aa).

The next 11 membrane-spanning stretches (helical) occupy residues 14–34, 48–68, 76–98, 145–165, 168–188, 222–242, 259–279, 285–305, 310–330, 350–370, and 373–393; these read IWAGQAVSLITSAILQMAIIF, MASLLGFLPYAVFGPAIGVLV, IMIGADLIIAAAGSVLTIVAFYM, SLQSISYIVSPAVAALLYSVW, NAIIAIDVLGAVIASITVAIV, FALLLVGTLYMFVYMPINALF, ITEISFASGMLIGGLLLGLFG, ILLITASIFMMGISLTISGLL, FFIFVVCCAIMGLSVPFYSGV, LTGSIMSLAMPIGLILSALFA, and IGVNHWFLLSGTLIICIAIVC.

The protein belongs to the major facilitator superfamily. Drug:H(+) antiporter-3 (DHA3) (TC 2.A.1.21) family.

The protein resides in the cell membrane. Its function is as follows. Confers resistance to 14-membered macrolides including erythromycin and to 15-membered macrolides but not to 16-membered macrolides, lincosamides or analogs of streptogramin B. May function as an efflux pump to regulate intracellular macrolide levels. The chain is Macrolide efflux protein A from Streptococcus pyogenes serotype M6 (strain ATCC BAA-946 / MGAS10394).